Here is a 96-residue protein sequence, read N- to C-terminus: Aspartyl/glutamyl-tRNA(Asn/Gln) amidotransferase subunit C (96 aa).

Belongs to the GatC family. Heterotrimer of A, B and C subunits.

It carries out the reaction L-glutamyl-tRNA(Gln) + L-glutamine + ATP + H2O = L-glutaminyl-tRNA(Gln) + L-glutamate + ADP + phosphate + H(+). The catalysed reaction is L-aspartyl-tRNA(Asn) + L-glutamine + ATP + H2O = L-asparaginyl-tRNA(Asn) + L-glutamate + ADP + phosphate + 2 H(+). Functionally, allows the formation of correctly charged Asn-tRNA(Asn) or Gln-tRNA(Gln) through the transamidation of misacylated Asp-tRNA(Asn) or Glu-tRNA(Gln) in organisms which lack either or both of asparaginyl-tRNA or glutaminyl-tRNA synthetases. The reaction takes place in the presence of glutamine and ATP through an activated phospho-Asp-tRNA(Asn) or phospho-Glu-tRNA(Gln). The polypeptide is Aspartyl/glutamyl-tRNA(Asn/Gln) amidotransferase subunit C (Oceanobacillus iheyensis (strain DSM 14371 / CIP 107618 / JCM 11309 / KCTC 3954 / HTE831)).